A 411-amino-acid chain; its full sequence is Acetylornithine aminotransferase (411 aa).

Pyridoxal 5'-phosphate contacts are provided by residues 107–108 and Phe-141; that span reads GT. A N(2)-acetyl-L-ornithine-binding site is contributed by Arg-144. Position 227-230 (227-230) interacts with pyridoxal 5'-phosphate; that stretch reads DEIQ. At Lys-256 the chain carries N6-(pyridoxal phosphate)lysine. Thr-284 is a binding site for N(2)-acetyl-L-ornithine. Thr-285 provides a ligand contact to pyridoxal 5'-phosphate.

It belongs to the class-III pyridoxal-phosphate-dependent aminotransferase family. ArgD subfamily. In terms of assembly, homodimer. Pyridoxal 5'-phosphate is required as a cofactor.

Its subcellular location is the cytoplasm. The catalysed reaction is N(2)-acetyl-L-ornithine + 2-oxoglutarate = N-acetyl-L-glutamate 5-semialdehyde + L-glutamate. Its pathway is amino-acid biosynthesis; L-arginine biosynthesis; N(2)-acetyl-L-ornithine from L-glutamate: step 4/4. The sequence is that of Acetylornithine aminotransferase from Xylella fastidiosa (strain 9a5c).